The chain runs to 139 residues: Putative pre-16S rRNA nuclease (139 aa).

It belongs to the YqgF nuclease family.

The protein localises to the cytoplasm. Could be a nuclease involved in processing of the 5'-end of pre-16S rRNA. This Photorhabdus laumondii subsp. laumondii (strain DSM 15139 / CIP 105565 / TT01) (Photorhabdus luminescens subsp. laumondii) protein is Putative pre-16S rRNA nuclease.